Here is a 365-residue protein sequence, read N- to C-terminus: tRNA/tmRNA (uracil-C(5))-methyltransferase (365 aa).

Positions 189, 217, 222, 238, and 298 each coordinate S-adenosyl-L-methionine. Catalysis depends on cysteine 323, which acts as the Nucleophile. The Proton acceptor role is filled by glutamate 357.

This sequence belongs to the class I-like SAM-binding methyltransferase superfamily. RNA M5U methyltransferase family. TrmA subfamily.

It catalyses the reaction uridine(54) in tRNA + S-adenosyl-L-methionine = 5-methyluridine(54) in tRNA + S-adenosyl-L-homocysteine + H(+). The enzyme catalyses uridine(341) in tmRNA + S-adenosyl-L-methionine = 5-methyluridine(341) in tmRNA + S-adenosyl-L-homocysteine + H(+). In terms of biological role, dual-specificity methyltransferase that catalyzes the formation of 5-methyluridine at position 54 (m5U54) in all tRNAs, and that of position 341 (m5U341) in tmRNA (transfer-mRNA). The protein is tRNA/tmRNA (uracil-C(5))-methyltransferase of Shewanella halifaxensis (strain HAW-EB4).